The primary structure comprises 360 residues: MATLFTVTTTSRPFPANPSKTFSPSISLKPNALSFSLTHHRPPRPLRFSKIRSSLPSESDSEPEGGYSITDEWGEQPAEPESPPDNAPSAVSDEWGEKSESVPEESVTRFAESDPPTNEDEWEEREADDGVDKTWELKRCLADTVYGTELGFRAGSEVRAEVLEIVNQLEALNPTQAPVENPELLDGNWVLLYTAFSELLPLLAAGSTPLLKVKSISQSIDTKSLSIDNSTTLSSPFADFSFSATASFEVRTPSRIEVSFKEGTLKPPEIKSSVDLPESVGVFGQEINLSFLKQSLNPLQDVAANISRAISGQPPLKLPFPGNRGSSWLLTTYLDKDLRISRGDGGLFVLAREGSSLLEL.

Over residues 1 to 37 the composition is skewed to polar residues; sequence MATLFTVTTTSRPFPANPSKTFSPSISLKPNALSFSL. The N-terminal 52 residues, 1-52, are a transit peptide targeting the chloroplast; the sequence is MATLFTVTTTSRPFPANPSKTFSPSISLKPNALSFSLTHHRPPRPLRFSKIR. Residues 1–130 are disordered; it reads MATLFTVTTT…EWEEREADDG (130 aa). A compositionally biased stretch (basic residues) spans 38 to 50; the sequence is THHRPPRPLRFSK. Residues 53–68 show a composition bias toward low complexity; it reads SSLPSESDSEPEGGYS. Residues 117–127 show a composition bias toward acidic residues; it reads TNEDEWEEREA.

This sequence belongs to the PAP/fibrillin family. In terms of tissue distribution, ubiquitous expression among various organs, but only at a very low level.

It is found in the plastid. Its subcellular location is the chloroplast. This Brassica campestris (Field mustard) protein is Plastid lipid-associated protein 3, chloroplastic (PAP3).